Here is a 278-residue protein sequence, read N- to C-terminus: Orotidine 5'-phosphate decarboxylase (278 aa).

The Proton donor role is filled by Lys-96.

The protein belongs to the OMP decarboxylase family. Type 2 subfamily.

It carries out the reaction orotidine 5'-phosphate + H(+) = UMP + CO2. It participates in pyrimidine metabolism; UMP biosynthesis via de novo pathway; UMP from orotate: step 2/2. The protein is Orotidine 5'-phosphate decarboxylase of Salinispora arenicola (strain CNS-205).